The primary structure comprises 317 residues: Pantothenate kinase (317 aa).

Residue 99–106 (GSVSVGKS) participates in ATP binding.

Belongs to the prokaryotic pantothenate kinase family.

Its subcellular location is the cytoplasm. It carries out the reaction (R)-pantothenate + ATP = (R)-4'-phosphopantothenate + ADP + H(+). It participates in cofactor biosynthesis; coenzyme A biosynthesis; CoA from (R)-pantothenate: step 1/5. This chain is Pantothenate kinase, found in Histophilus somni (strain 2336) (Haemophilus somnus).